The sequence spans 208 residues: Small ribosomal subunit protein uS4 (208 aa).

Residues 98–159 (RRLDNVIYRL…KSRTVAVITN (62 aa)) enclose the S4 RNA-binding domain.

This sequence belongs to the universal ribosomal protein uS4 family. In terms of assembly, part of the 30S ribosomal subunit. Contacts protein S5. The interaction surface between S4 and S5 is involved in control of translational fidelity.

Its function is as follows. One of the primary rRNA binding proteins, it binds directly to 16S rRNA where it nucleates assembly of the body of the 30S subunit. In terms of biological role, with S5 and S12 plays an important role in translational accuracy. The chain is Small ribosomal subunit protein uS4 from Desulfatibacillum aliphaticivorans.